The primary structure comprises 144 residues: 3-dehydroquinate dehydratase (144 aa).

The Proton acceptor role is filled by Tyr22. Asn73, His79, and Asp86 together coordinate substrate. His99 serves as the catalytic Proton donor. Substrate contacts are provided by residues 100-101 and Arg110; that span reads IS.

The protein belongs to the type-II 3-dehydroquinase family. As to quaternary structure, homododecamer.

The catalysed reaction is 3-dehydroquinate = 3-dehydroshikimate + H2O. It functions in the pathway metabolic intermediate biosynthesis; chorismate biosynthesis; chorismate from D-erythrose 4-phosphate and phosphoenolpyruvate: step 3/7. In terms of biological role, catalyzes a trans-dehydration via an enolate intermediate. This is 3-dehydroquinate dehydratase from Mycobacteroides abscessus (strain ATCC 19977 / DSM 44196 / CCUG 20993 / CIP 104536 / JCM 13569 / NCTC 13031 / TMC 1543 / L948) (Mycobacterium abscessus).